We begin with the raw amino-acid sequence, 159 residues long: Large ribosomal subunit protein uL15 (159 aa).

Residues 1 to 13 (MRLNELRDNDGAT) show a composition bias toward basic and acidic residues. Residues 1–41 (MRLNELRDNDGATKIRTRVGRGIGSGKGKTGGRGVKGQKSR) form a disordered region. Residues 21-35 (RGIGSGKGKTGGRGV) are compositionally biased toward gly residues.

This sequence belongs to the universal ribosomal protein uL15 family. Part of the 50S ribosomal subunit.

Binds to the 23S rRNA. This Maricaulis maris (strain MCS10) (Caulobacter maris) protein is Large ribosomal subunit protein uL15.